Reading from the N-terminus, the 550-residue chain is Chaperonin GroEL (550 aa).

ATP contacts are provided by residues Thr-30 to Pro-33, Lys-51, Asp-87 to Thr-91, Gly-414, and Asp-494.

Belongs to the chaperonin (HSP60) family. Forms a cylinder of 14 subunits composed of two heptameric rings stacked back-to-back. Interacts with the co-chaperonin GroES.

It localises to the cytoplasm. It catalyses the reaction ATP + H2O + a folded polypeptide = ADP + phosphate + an unfolded polypeptide.. Functionally, together with its co-chaperonin GroES, plays an essential role in assisting protein folding. The GroEL-GroES system forms a nano-cage that allows encapsulation of the non-native substrate proteins and provides a physical environment optimized to promote and accelerate protein folding. This Buchnera aphidicola subsp. Thelaxes suberi protein is Chaperonin GroEL.